The primary structure comprises 339 residues: Malate/(S)-sulfolactate dehydrogenase (339 aa).

This sequence belongs to the LDH2/MDH2 oxidoreductase family. As to quaternary structure, homodimer.

It is found in the cytoplasm. The catalysed reaction is (S)-malate + NAD(+) = oxaloacetate + NADH + H(+). The enzyme catalyses (S)-malate + NADP(+) = oxaloacetate + NADPH + H(+). It catalyses the reaction (2S)-3-sulfolactate + NAD(+) = 3-sulfopyruvate + NADH + H(+). Acts on oxaloacetate, sulfopyruvate but not on pyruvate. Has a higher selectivity for the coenzyme NADH than for NADPH. The polypeptide is Malate/(S)-sulfolactate dehydrogenase (mdh) (Methanothermus fervidus (strain ATCC 43054 / DSM 2088 / JCM 10308 / V24 S)).